Reading from the N-terminus, the 712-residue chain is Polyribonucleotide nucleotidyltransferase (712 aa).

Mg(2+) contacts are provided by Asp-485 and Asp-491. The KH domain occupies 552 to 615 (PRIHTIKINP…EAIRRIEAIT (64 aa)). The S1 motif domain occupies 621-689 (NRIYEGKVVR…RQGRVRLSIK (69 aa)).

Belongs to the polyribonucleotide nucleotidyltransferase family. Component of the RNA degradosome, which is a multiprotein complex involved in RNA processing and mRNA degradation. Mg(2+) is required as a cofactor.

Its subcellular location is the cytoplasm. It carries out the reaction RNA(n+1) + phosphate = RNA(n) + a ribonucleoside 5'-diphosphate. Functionally, involved in mRNA degradation. Catalyzes the phosphorolysis of single-stranded polyribonucleotides processively in the 3'- to 5'-direction. The polypeptide is Polyribonucleotide nucleotidyltransferase (Aeromonas hydrophila subsp. hydrophila (strain ATCC 7966 / DSM 30187 / BCRC 13018 / CCUG 14551 / JCM 1027 / KCTC 2358 / NCIMB 9240 / NCTC 8049)).